The primary structure comprises 490 residues: Cytochrome P450 71A25 (490 aa).

Residues 1–21 (MMMMIILLWSIIFMTILFLKK) form a helical membrane-spanning segment. Position 431 (C431) interacts with heme.

Belongs to the cytochrome P450 family. Heme is required as a cofactor.

The protein localises to the membrane. The protein is Cytochrome P450 71A25 (CYP71A25) of Arabidopsis thaliana (Mouse-ear cress).